Consider the following 491-residue polypeptide: Probable cytosol aminopeptidase (491 aa).

Residues Lys264 and Asp269 each contribute to the Mn(2+) site. Residue Lys276 is part of the active site. The Mn(2+) site is built by Asp287, Asp346, and Glu348. Residue Arg350 is part of the active site.

The protein belongs to the peptidase M17 family. It depends on Mn(2+) as a cofactor.

The protein localises to the cytoplasm. It catalyses the reaction Release of an N-terminal amino acid, Xaa-|-Yaa-, in which Xaa is preferably Leu, but may be other amino acids including Pro although not Arg or Lys, and Yaa may be Pro. Amino acid amides and methyl esters are also readily hydrolyzed, but rates on arylamides are exceedingly low.. It carries out the reaction Release of an N-terminal amino acid, preferentially leucine, but not glutamic or aspartic acids.. Its function is as follows. Presumably involved in the processing and regular turnover of intracellular proteins. Catalyzes the removal of unsubstituted N-terminal amino acids from various peptides. The protein is Probable cytosol aminopeptidase of Xylella fastidiosa (strain Temecula1 / ATCC 700964).